The primary structure comprises 332 residues: Aspartate carbamoyltransferase catalytic subunit (332 aa).

Positions 1 to 20 are disordered; sequence MPNTHDTKNNVSPSEYAKFD. The carbamoyl phosphate site is built by Arg72 and Thr73. Lys100 is an L-aspartate binding site. Residues Arg122, His152, and Gln155 each contribute to the carbamoyl phosphate site. Residues Arg186 and Arg241 each contribute to the L-aspartate site. Carbamoyl phosphate contacts are provided by Gly282 and Pro283.

The protein belongs to the aspartate/ornithine carbamoyltransferase superfamily. ATCase family. As to quaternary structure, heterododecamer (2C3:3R2) of six catalytic PyrB chains organized as two trimers (C3), and six regulatory PyrI chains organized as three dimers (R2).

It carries out the reaction carbamoyl phosphate + L-aspartate = N-carbamoyl-L-aspartate + phosphate + H(+). It participates in pyrimidine metabolism; UMP biosynthesis via de novo pathway; (S)-dihydroorotate from bicarbonate: step 2/3. Its function is as follows. Catalyzes the condensation of carbamoyl phosphate and aspartate to form carbamoyl aspartate and inorganic phosphate, the committed step in the de novo pyrimidine nucleotide biosynthesis pathway. The sequence is that of Aspartate carbamoyltransferase catalytic subunit from Psychrobacter sp. (strain TAD1).